The primary structure comprises 473 residues: Cysteine--tRNA ligase (473 aa).

Residue Cys28 coordinates Zn(2+). The 'HIGH' region signature appears at 30–40 (PTVYNMPHIGN). Zn(2+) is bound by residues Cys213, His238, and Glu242. The 'KMSKS' region motif lies at 270–274 (KMSKS). Lys273 serves as a coordination point for ATP.

It belongs to the class-I aminoacyl-tRNA synthetase family. The cofactor is Zn(2+).

It localises to the cytoplasm. It catalyses the reaction tRNA(Cys) + L-cysteine + ATP = L-cysteinyl-tRNA(Cys) + AMP + diphosphate. The chain is Cysteine--tRNA ligase from Methanosarcina mazei (strain ATCC BAA-159 / DSM 3647 / Goe1 / Go1 / JCM 11833 / OCM 88) (Methanosarcina frisia).